We begin with the raw amino-acid sequence, 262 residues long: Acyl-[acyl-carrier-protein]--UDP-N-acetylglucosamine O-acyltransferase (262 aa).

Belongs to the transferase hexapeptide repeat family. LpxA subfamily. As to quaternary structure, homotrimer.

The protein resides in the cytoplasm. It carries out the reaction a (3R)-hydroxyacyl-[ACP] + UDP-N-acetyl-alpha-D-glucosamine = a UDP-3-O-[(3R)-3-hydroxyacyl]-N-acetyl-alpha-D-glucosamine + holo-[ACP]. It functions in the pathway glycolipid biosynthesis; lipid IV(A) biosynthesis; lipid IV(A) from (3R)-3-hydroxytetradecanoyl-[acyl-carrier-protein] and UDP-N-acetyl-alpha-D-glucosamine: step 1/6. In terms of biological role, involved in the biosynthesis of lipid A, a phosphorylated glycolipid that anchors the lipopolysaccharide to the outer membrane of the cell. This Burkholderia ambifaria (strain MC40-6) protein is Acyl-[acyl-carrier-protein]--UDP-N-acetylglucosamine O-acyltransferase.